A 160-amino-acid polypeptide reads, in one-letter code: UPF0479 membrane protein YER190C-B (160 aa).

2 consecutive transmembrane segments (helical) span residues 39 to 59 and 136 to 156; these read IVFCLPFFPALFFVPVQKVLQ and VPMIWLDVFQVFFVFLVISQH.

Belongs to the UPF0479 family.

Its subcellular location is the membrane. The polypeptide is UPF0479 membrane protein YER190C-B (Saccharomyces cerevisiae (strain ATCC 204508 / S288c) (Baker's yeast)).